The primary structure comprises 390 residues: NADH-quinone oxidoreductase subunit D (390 aa).

This sequence belongs to the complex I 49 kDa subunit family. NDH-1 is composed of 14 different subunits. Subunits NuoB, C, D, E, F, and G constitute the peripheral sector of the complex.

Its subcellular location is the cell membrane. The enzyme catalyses a quinone + NADH + 5 H(+)(in) = a quinol + NAD(+) + 4 H(+)(out). Its function is as follows. NDH-1 shuttles electrons from NADH, via FMN and iron-sulfur (Fe-S) centers, to quinones in the respiratory chain. The immediate electron acceptor for the enzyme in this species is believed to be ubiquinone. Couples the redox reaction to proton translocation (for every two electrons transferred, four hydrogen ions are translocated across the cytoplasmic membrane), and thus conserves the redox energy in a proton gradient. This is NADH-quinone oxidoreductase subunit D from Wolbachia sp. subsp. Brugia malayi (strain TRS).